Here is a 303-residue protein sequence, read N- to C-terminus: MKEEYKLSHLKELEAESIHIIREVAAEFENPVMLYSIGKDSSVMVRLAEKAFYPGKVPFPLMHIDSKWKFKEMIQFRDEYAKKYGWNLIVESNMEAFHAGVGPFTHGSKVHTDLMKTQALLRALDKYKFDAAFGGARRDEEKSRAKERIFSFRDKFHQWDPKNQRPELWDIYNARVHKGESIRVFPLSNWTELDIWQYIRLENIPIVPLYYAKERPVVQMDGNLIMADDERLPEKYRDQIEMKMVRFRTLGCWPLTGAVESEADTIEKIVEEMMTTTKSERTTRVIDFDQEGSMEQKKREGYF.

It belongs to the PAPS reductase family. CysD subfamily. Heterodimer composed of CysD, the smaller subunit, and CysN.

It carries out the reaction sulfate + ATP + H(+) = adenosine 5'-phosphosulfate + diphosphate. It functions in the pathway sulfur metabolism; hydrogen sulfide biosynthesis; sulfite from sulfate: step 1/3. Functionally, with CysN forms the ATP sulfurylase (ATPS) that catalyzes the adenylation of sulfate producing adenosine 5'-phosphosulfate (APS) and diphosphate, the first enzymatic step in sulfur assimilation pathway. APS synthesis involves the formation of a high-energy phosphoric-sulfuric acid anhydride bond driven by GTP hydrolysis by CysN coupled to ATP hydrolysis by CysD. The protein is Sulfate adenylyltransferase subunit 2 of Bacteroides fragilis (strain YCH46).